The chain runs to 219 residues: 7-cyano-7-deazaguanine synthase (219 aa).

Tyr9–Leu19 is an ATP binding site. 4 residues coordinate Zn(2+): Cys185, Cys193, Cys196, and Cys199.

Belongs to the QueC family. Zn(2+) is required as a cofactor.

The enzyme catalyses 7-carboxy-7-deazaguanine + NH4(+) + ATP = 7-cyano-7-deazaguanine + ADP + phosphate + H2O + H(+). Its pathway is purine metabolism; 7-cyano-7-deazaguanine biosynthesis. In terms of biological role, catalyzes the ATP-dependent conversion of 7-carboxy-7-deazaguanine (CDG) to 7-cyano-7-deazaguanine (preQ(0)). In Marinomonas sp. (strain MWYL1), this protein is 7-cyano-7-deazaguanine synthase.